The primary structure comprises 729 residues: Fatty acid oxidation complex subunit alpha (729 aa).

Positions 1 to 189 (MLYKGDTLYL…KIGLVDGVVK (189 aa)) are enoyl-CoA hydratase/isomerase. Asp296 contributes to the substrate binding site. A 3-hydroxyacyl-CoA dehydrogenase region spans residues 311-729 (ETPKQAAVLG…ARPVGDLKTA (419 aa)). NAD(+) contacts are provided by residues Met324, Asp343, 400-402 (IVE), Lys407, and Ser429. The active-site For 3-hydroxyacyl-CoA dehydrogenase activity is His450. Residue Asn453 participates in NAD(+) binding. Asn500 and Tyr660 together coordinate substrate. Positions 708–729 (RHNEPYYPPVEPARPVGDLKTA) are disordered.

It in the N-terminal section; belongs to the enoyl-CoA hydratase/isomerase family. This sequence in the C-terminal section; belongs to the 3-hydroxyacyl-CoA dehydrogenase family. As to quaternary structure, heterotetramer of two alpha chains (FadB) and two beta chains (FadA).

The enzyme catalyses a (3S)-3-hydroxyacyl-CoA + NAD(+) = a 3-oxoacyl-CoA + NADH + H(+). It carries out the reaction a (3S)-3-hydroxyacyl-CoA = a (2E)-enoyl-CoA + H2O. It catalyses the reaction a 4-saturated-(3S)-3-hydroxyacyl-CoA = a (3E)-enoyl-CoA + H2O. The catalysed reaction is (3S)-3-hydroxybutanoyl-CoA = (3R)-3-hydroxybutanoyl-CoA. The enzyme catalyses a (3Z)-enoyl-CoA = a 4-saturated (2E)-enoyl-CoA. It carries out the reaction a (3E)-enoyl-CoA = a 4-saturated (2E)-enoyl-CoA. The protein operates within lipid metabolism; fatty acid beta-oxidation. Involved in the aerobic and anaerobic degradation of long-chain fatty acids via beta-oxidation cycle. Catalyzes the formation of 3-oxoacyl-CoA from enoyl-CoA via L-3-hydroxyacyl-CoA. It can also use D-3-hydroxyacyl-CoA and cis-3-enoyl-CoA as substrate. The protein is Fatty acid oxidation complex subunit alpha of Escherichia coli O157:H7.